We begin with the raw amino-acid sequence, 1410 residues long: Pogo transposable element with ZNF domain (1410 aa).

A disordered region spans residues 238–291 (RSTVPQSQSQQTKSTPSTSTTPTATQPTSLGQLAVQSPGQSNQTTNPKLAPSFP). Residues 239–266 (STVPQSQSQQTKSTPSTSTTPTATQPTS) show a composition bias toward low complexity. A compositionally biased stretch (polar residues) spans 267-284 (LGQLAVQSPGQSNQTTNP). Lys319 participates in a covalent cross-link: Glycyl lysine isopeptide (Lys-Gly) (interchain with G-Cter in SUMO2). Residues 332-361 (QSPGPVVVSNNSSAHGSQRTSGPESSMKVT) are disordered. Ser333 is subject to Phosphoserine. Positions 345 to 361 (AHGSQRTSGPESSMKVT) are enriched in polar residues. Residue Lys359 forms a Glycyl lysine isopeptide (Lys-Gly) (interchain with G-Cter in SUMO2) linkage. Phosphoserine is present on Ser363. The segment at 375 to 397 (KICPRCNAQFRVTEALRGHMCYC) adopts a C2H2-type 1; atypical zinc-finger fold. Positions 409 to 456 (KSLDSEPSVPSAAKPPSPEKTAPVASTPSSTPIPALSPPTKVPEPNEN) are disordered. Residue Lys422 forms a Glycyl lysine isopeptide (Lys-Gly) (interchain with G-Cter in SUMO2) linkage. Ser425 carries the post-translational modification Phosphoserine. Thr439 carries the post-translational modification Phosphothreonine. Ser445 carries the post-translational modification Phosphoserine. A Glycyl lysine isopeptide (Lys-Gly) (interchain with G-Cter in SUMO2) cross-link involves residue Lys449. Residue Thr463 is modified to Phosphothreonine. A Glycyl lysine isopeptide (Lys-Gly) (interchain with G-Cter in SUMO2) cross-link involves residue Lys489. 6 consecutive C2H2-type zinc fingers follow at residues 494–516 (FRCP…MKHH), 530–553 (TICQ…ENVH), 560–583 (TKCK…KDTH), 590–613 (YVCQ…RMIH), 619–641 (LLCP…YMRH), and 647–670 (YHCN…LQHH). Lys629 is covalently cross-linked (Glycyl lysine isopeptide (Lys-Gly) (interchain with G-Cter in SUMO2)). A Glycyl lysine isopeptide (Lys-Gly) (interchain with G-Cter in SUMO2) cross-link involves residue Lys677. The disordered stretch occupies residues 693 to 715 (SRGQPRTVPVSSNDTPPSALQEA). The span at 701–710 (PVSSNDTPPS) shows a compositional bias: polar residues. The C2H2-type 8 zinc finger occupies 771 to 794 (VHCSLCRYSTCCSRAYANHMINNH). Lys801 participates in a covalent cross-link: Glycyl lysine isopeptide (Lys-Gly) (interchain with G-Cter in SUMO2). The segment at 810 to 850 (VSGIKLACTSCTFVTSVGDAMAKHLVFNPSHRSSSILPRGL) is required for interaction with CBX5. The C2H2-type 9 zinc-finger motif lies at 815–840 (LACTSCTFVTSVGDAMAKHLVFNPSH). Ser856 is subject to Phosphoserine. Disordered regions lie at residues 857-927 (RHGQ…PQAL) and 942-969 (VDDQ…GVGK). A compositionally biased stretch (basic and acidic residues) spans 860 to 870 (QTRDRVHDRNV). Lys883 participates in a covalent cross-link: Glycyl lysine isopeptide (Lys-Gly) (interchain with G-Cter in SUMO2). Low complexity predominate over residues 892–915 (ATPAEPEELLTPLAPALPSPASTA). The 71-residue stretch at 1015–1085 (GENLEGKYLS…MLRHHLTPHA (71 aa)) folds into the HTH CENPB-type domain. The DDE-1 domain occupies 1117–1323 (LPLSMIVAID…DCPELVQRSF (207 aa)). At Ser1338 the chain carries Phosphoserine. Positions 1340-1360 (TRNADMQEELIASLEEQLKLS) form a coiled coil. The disordered stretch occupies residues 1360–1400 (SGEHSESSTPRPRSSPEETIEPESLHQLFEGESETESFYGF). Residues Ser1364 and Ser1367 each carry the phosphoserine modification. Thr1368 is subject to Phosphothreonine. Residues Ser1373 and Ser1374 each carry the phosphoserine modification. Position 1378 is a phosphothreonine (Thr1378). Residues 1380-1404 (EPESLHQLFEGESETESFYGFEEAD) carry the Integrase domain-binding motif (IBM) motif. Ser1392 carries the phosphoserine; by CK2 modification. Residue Thr1394 is modified to Phosphothreonine. Ser1396 is modified (phosphoserine; by CK2).

Interacts with CBX1, CBX3, MAD2L2 and CHAMP1. Interacts with CBX5; POGZ competes with PXVXL motif-containing proteins such as INCENP and TRIM28 for interaction with CBX5. Interacts (via IBM motif) with PSIP1 isoform 1 (via IBD domain); phosphorylation increases its affinity for PSIP1. Interacts with HDGFL2. Phosphorylation increases its interaction with PSIP1.

The protein resides in the nucleus. It is found in the chromosome. Its subcellular location is the cytoplasm. In terms of biological role, plays a role in mitotic cell cycle progression and is involved in kinetochore assembly and mitotic sister chromatid cohesion. Probably through its association with CBX5 plays a role in mitotic chromosome segregation by regulating aurora kinase B/AURKB activation and AURKB and CBX5 dissociation from chromosome arms. Promotes the repair of DNA double-strand breaks through the homologous recombination pathway. This Homo sapiens (Human) protein is Pogo transposable element with ZNF domain (POGZ).